Consider the following 331-residue polypeptide: Dioxygenase swnH2 (331 aa).

Over residues 1–11 the composition is skewed to polar residues; the sequence is MINSDAQSAQK. Residues 1-31 form a disordered region; the sequence is MINSDAQSAQKQVEVEKPDEKYSAPRLLPPI. Residues 13 to 23 are compositionally biased toward basic and acidic residues; that stretch reads VEVEKPDEKYS. Residues histidine 173, aspartate 175, and histidine 250 each coordinate Fe cation.

This sequence belongs to the PhyH family. Homodimer. It depends on Fe cation as a cofactor.

It participates in mycotoxin biosynthesis. Dioxygenase; part of the gene cluster that mediates the biosynthesis of swainsonine (SW), a cytotoxic fungal alkaloid and a potential cancer therapy drug. Swainsonine production occurs via a multibranched pathway and is dispensable for fungal colonization of plants and infection of insect hosts. The first step of swainsonine biosynthesis is the production of the precursor pipecolic acid (PA) via conversion of L-lysine (Lys) to 1-piperideine-6-carboxylate (P6C) by the aminotransferase swnA, the latter being further reduced to PA by the reductase swnR. PA can be converted from lysine by both the SW biosynthetic cluster and the unclustered genes such as lysine cyclodeaminase. The PKS-NRPS hybrid synthetase swnK uptakes and condensates PA and malonyl-CoA with and without skipping of the ketoreductase (KR) domain in order to produce 3 intermediates, 1-oxoindolizidine, (1S)-1-hydroxyindolizin, and (1R)-1-hydroxyindolizine; with the transisomer (1S)-1-hydroxyindolizin being predominant. The terminal thioester reductase (TE) domain of swnK is involved in reduction of the thioester bond to release the intermediate aldehydes. The oxidoreductase swnN could contribute to the reduction of 1-oxoindolizidine to (1S)-1-hydroxyindolizin and (1R)-1-hydroxyindolizine, contributing to the major route of SW production. The dioxygenase swnH2 would be responsible for the oxidization of (1R)-1-hydroxyindolizine into (1R,2S)-1,2-dihydroxyindolizine and of (1S)-1-hydroxyindolizin to yield both (1R,2S)-1,2-dihydroxyindolizine and (1S,2S)-1,2-dihydroxyindolizine. The dioxygenase swnH1 then performs the conversion of the 1,2-dihydroxyindolizine epimers to SW. The protein is Dioxygenase swnH2 of Metarhizium robertsii (strain ARSEF 23 / ATCC MYA-3075) (Metarhizium anisopliae (strain ARSEF 23)).